Reading from the N-terminus, the 192-residue chain is MLPPALNIPKWLEENSHLLQPPVNNYCVYHPSSPATAGYTVMIVGGPNARTDYHINTTPEFFYQYRGSMLLKTADTSVSPPVFQDIPIHEGSIFLLPANTPHCPVRFKDTVGVVMEQPRPKDAVDTMLWFCKKCGEVVWEKRFVCTDLGTQVKEVVEEFAADQEKRTCKACGTIAETRYQEGEIVQPPRFLE.

Arg50 contacts O2. Residues His54, Glu60, and His102 each contribute to the Fe cation site. Glu60 contacts substrate. Arg106 and Glu116 together coordinate substrate. Residues Cys131, Cys134, Cys168, and Cys171 each contribute to the a divalent metal cation site.

The protein belongs to the 3-HAO family. It depends on Fe(2+) as a cofactor.

The protein localises to the cytoplasm. The catalysed reaction is 3-hydroxyanthranilate + O2 = (2Z,4Z)-2-amino-3-carboxymuconate 6-semialdehyde. It functions in the pathway cofactor biosynthesis; NAD(+) biosynthesis; quinolinate from L-kynurenine: step 3/3. Functionally, catalyzes the oxidative ring opening of 3-hydroxyanthranilate to 2-amino-3-carboxymuconate semialdehyde, which spontaneously cyclizes to quinolinate. The protein is 3-hydroxyanthranilate 3,4-dioxygenase (bna1) of Neosartorya fischeri (strain ATCC 1020 / DSM 3700 / CBS 544.65 / FGSC A1164 / JCM 1740 / NRRL 181 / WB 181) (Aspergillus fischerianus).